Here is an 80-residue protein sequence, read N- to C-terminus: U-actitoxin-Avd9a (80 aa).

The N-terminal stretch at 1 to 20 (MNLKVLAVFVLCAILVVVTA) is a signal peptide. A propeptide spanning residues 21 to 39 (ERRGTETGVYKKDTLQDLI) is cleaved from the precursor. A ShKT domain is found at 45–80 (CIDRFPTGTCKQVKKGGSCKNSDKYRMNCRKTCGLC). Disulfide bonds link Cys45–Cys80, Cys54–Cys73, and Cys63–Cys77. The segment at 68–69 (KY) is crucial for binding to potassium channels.

Belongs to the sea anemone type 1 potassium channel toxin family. Type 1b subfamily.

Its subcellular location is the secreted. The protein resides in the nematocyst. Functionally, inhibits voltage-gated potassium channels (Kv1/KCNA). This is U-actitoxin-Avd9a from Anemonia viridis (Snakelocks anemone).